Here is a 507-residue protein sequence, read N- to C-terminus: Histidine ammonia-lyase (507 aa).

The segment at residues 142–144 (ASG) is a cross-link (5-imidazolinone (Ala-Gly)). 2,3-didehydroalanine (Ser) is present on Ser143.

The protein belongs to the PAL/histidase family. Post-translationally, contains an active site 4-methylidene-imidazol-5-one (MIO), which is formed autocatalytically by cyclization and dehydration of residues Ala-Ser-Gly.

The protein resides in the cytoplasm. The catalysed reaction is L-histidine = trans-urocanate + NH4(+). Its pathway is amino-acid degradation; L-histidine degradation into L-glutamate; N-formimidoyl-L-glutamate from L-histidine: step 1/3. The protein is Histidine ammonia-lyase of Symbiobacterium thermophilum (strain DSM 24528 / JCM 14929 / IAM 14863 / T).